Consider the following 370-residue polypeptide: Phospho-2-dehydro-3-deoxyheptonate aldolase, tyrosine-inhibited (370 aa).

This sequence belongs to the class-I DAHP synthase family.

The catalysed reaction is D-erythrose 4-phosphate + phosphoenolpyruvate + H2O = 7-phospho-2-dehydro-3-deoxy-D-arabino-heptonate + phosphate. It functions in the pathway metabolic intermediate biosynthesis; chorismate biosynthesis; chorismate from D-erythrose 4-phosphate and phosphoenolpyruvate: step 1/7. Inhibited by tyrosine. Stereospecific condensation of phosphoenolpyruvate (PEP) and D-erythrose-4-phosphate (E4P) giving rise to 3-deoxy-D-arabino-heptulosonate-7-phosphate (DAHP). The protein is Phospho-2-dehydro-3-deoxyheptonate aldolase, tyrosine-inhibited (ARO4) of Candida albicans (strain SC5314 / ATCC MYA-2876) (Yeast).